A 290-amino-acid chain; its full sequence is Dual-specificity RNA pseudouridine synthase RluF (290 aa).

Positions 7–72 constitute an S4 RNA-binding domain; it reads VRLNKYISES…EAEDLVLIAL (66 aa). 2 interaction with RNA regions span residues 105–108 and 187–190; these read RLDK and RQIR. Asp107 functions as the Nucleophile in the catalytic mechanism. A disordered region spans residues 241–290; that stretch reads SEAKPKAKAKPKTAGIKRPVVKMEKTAEKGGRPASNGKRFTSPGRKKKGR. The segment covering 261–271 has biased composition (basic and acidic residues); the sequence is VKMEKTAEKGG.

Belongs to the pseudouridine synthase RsuA family. Monomer.

The catalysed reaction is uridine(2604) in 23S rRNA = pseudouridine(2604) in 23S rRNA. It carries out the reaction uridine(35) in tRNA(Tyr) = pseudouridine(35) in tRNA(Tyr). Functionally, dual specificity enzyme that catalyzes the synthesis of pseudouridine from uracil-2604 in 23S ribosomal RNA and from uracil-35 in the anticodon of tRNA(Tyr). The protein is Dual-specificity RNA pseudouridine synthase RluF (rluF) of Escherichia coli O157:H7.